Reading from the N-terminus, the 154-residue chain is Ribosome maturation factor RimP (154 aa).

Belongs to the RimP family.

It localises to the cytoplasm. In terms of biological role, required for maturation of 30S ribosomal subunits. The chain is Ribosome maturation factor RimP from Prochlorococcus marinus (strain MIT 9303).